The primary structure comprises 259 residues: Acetylglutamate kinase (259 aa).

Residues 46–47, Arg68, and Asn162 each bind substrate; that span reads GG.

Belongs to the acetylglutamate kinase family. ArgB subfamily.

The protein localises to the cytoplasm. It catalyses the reaction N-acetyl-L-glutamate + ATP = N-acetyl-L-glutamyl 5-phosphate + ADP. Its pathway is amino-acid biosynthesis; L-arginine biosynthesis; N(2)-acetyl-L-ornithine from L-glutamate: step 2/4. Functionally, catalyzes the ATP-dependent phosphorylation of N-acetyl-L-glutamate. This is Acetylglutamate kinase from Roseiflexus castenholzii (strain DSM 13941 / HLO8).